Consider the following 438-residue polypeptide: Indole diterpene prenyltransferase janD (438 aa).

Residue 80–81 (FM) coordinates L-tryptophan. Substrate is bound by residues arginine 102, lysine 190, arginine 264, lysine 266, tyrosine 268, tyrosine 350, tyrosine 414, and tyrosine 418.

This sequence belongs to the tryptophan dimethylallyltransferase family.

It functions in the pathway secondary metabolite biosynthesis. Functionally, indole diterpene prenyltransferase; part of the gene cluster that mediates the biosynthesis of the indole diterpenes janthitremanes such as shearinine K or shearinine A. The geranylgeranyl diphosphate (GGPP) synthase janG catalyzes the first step in janthitremane biosynthesis via conversion of farnesyl pyrophosphate and isopentyl pyrophosphate into geranylgeranyl pyrophosphate (GGPP). Condensation of indole-3-glycerol phosphate with GGPP by the prenyl transferase janC then forms 3-geranylgeranylindole (3-GGI). Epoxidation by the FAD-dependent monooxygenase janM leads to a epoxidized-GGI that is substrate of the terpene cyclase janB for cyclization to yield paspaline. Paspaline is subsequently converted to 13-desoxypaspaline by the cytochrome P450 monooxygenase janP, via beta-PC-M6 in a series of alpha-face oxidations. The cytochrome P450 monooxygenase janQ is proposed to carry out sequential beta-face oxidation steps at C-7 and C-13 of 13-desoxypaspaline to form paspalicine and paspalinine respectively. The indole diterpene prenyltransferase janD may then convert paspalinine into shearinine K which is substrate of janO and/or additional enzymes for oxidation and cyclization to generate shearinine A. This Penicillium janthinellum (Penicillium vitale) protein is Indole diterpene prenyltransferase janD.